A 408-amino-acid chain; its full sequence is Acetate kinase (408 aa).

Asn-7 contributes to the Mg(2+) binding site. Lys-14 provides a ligand contact to ATP. Position 98 (Arg-98) interacts with substrate. Asp-155 serves as the catalytic Proton donor/acceptor. ATP-binding positions include 214–218 (HLGNG), 289–291 (DLR), and 337–341 (GVGEN). Glu-390 is a binding site for Mg(2+).

This sequence belongs to the acetokinase family. Homodimer. Mg(2+) is required as a cofactor. The cofactor is Mn(2+).

It localises to the cytoplasm. It catalyses the reaction acetate + ATP = acetyl phosphate + ADP. The protein operates within metabolic intermediate biosynthesis; acetyl-CoA biosynthesis; acetyl-CoA from acetate: step 1/2. Functionally, catalyzes the formation of acetyl phosphate from acetate and ATP. Can also catalyze the reverse reaction. The chain is Acetate kinase from Cyanothece sp. (strain PCC 7425 / ATCC 29141).